The chain runs to 420 residues: RING finger protein 39 (420 aa).

The RING-type zinc finger occupies 88–135; it reads CPLCGGSFEDPVLLACEHSFCRACLARRWGTPPATGTEASPTACPCCG. A B30.2/SPRY domain is found at 210–420; sequence DDLPEDYPVV…APLRIVPAES (211 aa).

As to expression, expressed in testis.

It localises to the cytoplasm. It catalyses the reaction S-ubiquitinyl-[E2 ubiquitin-conjugating enzyme]-L-cysteine + [acceptor protein]-L-lysine = [E2 ubiquitin-conjugating enzyme]-L-cysteine + N(6)-ubiquitinyl-[acceptor protein]-L-lysine.. The protein operates within protein modification; protein ubiquitination. In terms of biological role, plays an inhibitory role in anti-RNA viral innate immunity by targeting the adapter DDX3X and promoting its 'Lys-48'-linked polyubiquitination. Alternatively, enhances the cGAS-STING pathway activation by promoting 'Lys-63'-linked ubiquitination of STING1, facilitating the STING1-TBK1 complex formation and STING1 activation. Functionally, (Microbial infection) Plays a positive role in human immunodeficiency virus (HIV-1) replication. The chain is RING finger protein 39 (RNF39) from Homo sapiens (Human).